Here is a 139-residue protein sequence, read N- to C-terminus: MSIFPAQPSDKKAVEEGAAFMPRFDASGLITAIVTDARDGELLMVAHMNEEALRLTLETGIAHYWSRSRKTLWKKGETSGNLQSVVELRTDCDQDALWLKVHVAGDGPTCHTGRRSCFYRQVVSSGGKVALTMASDHDQ.

Aspartate 91 contributes to the Mg(2+) binding site. Cysteine 92 contacts Zn(2+). The Mg(2+) site is built by aspartate 93 and aspartate 95. Zn(2+)-binding residues include cysteine 110 and cysteine 117.

It belongs to the PRA-CH family. In terms of assembly, homodimer. Requires Mg(2+) as cofactor. Zn(2+) is required as a cofactor.

The protein localises to the cytoplasm. The enzyme catalyses 1-(5-phospho-beta-D-ribosyl)-5'-AMP + H2O = 1-(5-phospho-beta-D-ribosyl)-5-[(5-phospho-beta-D-ribosylamino)methylideneamino]imidazole-4-carboxamide. It functions in the pathway amino-acid biosynthesis; L-histidine biosynthesis; L-histidine from 5-phospho-alpha-D-ribose 1-diphosphate: step 3/9. Functionally, catalyzes the hydrolysis of the adenine ring of phosphoribosyl-AMP. In Brucella abortus (strain S19), this protein is Phosphoribosyl-AMP cyclohydrolase.